The following is a 676-amino-acid chain: Electrogenic aspartate/glutamate antiporter SLC25A13, mitochondrial (676 aa).

Ala2 is modified (N-acetylalanine). The interval 2–295 (AAAKVALTKR…TLADIERIAP (294 aa)) is regulatory N-terminal domain. Residues 2–332 (AAAKVALTKR…LLQLAESAYR (331 aa)) lie on the Mitochondrial intermembrane side of the membrane. N6-acetyllysine is present on Lys18. EF-hand domains follow at residues 51-86 (SQPN…SVLC), 87-122 (APDA…TTIH), 123-157 (QHIP…FLLE), and 158-193 (IQLE…IRPH). Ca(2+)-binding residues include Asp66, Thr68, Asp70, Leu72, and Glu77. The linker loop domain stretch occupies residues 296 to 311 (LEEGMLPFNLAEAQRQ). Residues 322–613 (FLLQLAESAY…LQRWFYVDFG (292 aa)) form a carrier domain region. Solcar repeat units lie at residues 327-419 (AESA…VRDK), 427-511 (VPLL…VKAS), and 519-607 (VSPG…LQRW). A helical transmembrane segment spans residues 333-350 (FGLGSIAGAVGATAVYPI). Topologically, residues 351–393 (DLVKTRMQNQRSTGSFVGELMYKNSFDCFKKVLRYEGFFGLYR) are mitochondrial matrix. N6-acetyllysine is present on residues Lys354 and Lys373. Residues 394-413 (GLLPQLLGVAPEKAIKLTVN) traverse the membrane as a helical segment. Over 414–436 (DFVRDKFMHKDGSVPLLAEIFAG) the chain is Mitochondrial intermembrane. Residues 437-450 (GCAGGSQVIFTNPL) traverse the membrane as a helical segment. Residues 451–485 (EIVKIRLQVAGEITTGPRVSALSVVRDLGFFGIYK) lie on the Mitochondrial matrix side of the membrane. Lys454 is modified (N6-methyllysine). Lys485 is subject to N6-acetyllysine; alternate. An N6-succinyllysine; alternate modification is found at Lys485. A helical membrane pass occupies residues 486–505 (GAKACFLRDIPFSAIYFPCY). Over 506 to 524 (AHVKASFANEDGQVSPGSL) the chain is Mitochondrial intermembrane. A helical membrane pass occupies residues 525 to 542 (LLAGAIAGMPAASLVTPA). The Mitochondrial matrix segment spans residues 543–581 (DVIKTRLQVAARAGQTTYNGVTDCFRKILREEGPKALWK). The residue at position 581 (Lys581) is an N6-succinyllysine. Residues 582 to 601 (GVAARVFRSSPQFGVTLLTY) form a helical membrane-spanning segment. The Mitochondrial intermembrane segment spans residues 602 to 676 (ELLQRWFYVD…STSKVTAGDS (75 aa)). The interval 614–676 (GVKPVGSEPV…STSKVTAGDS (63 aa)) is C-terminal domain. Lys663 carries the post-translational modification N6-acetyllysine. Residue Ser667 is modified to Phosphoserine.

The protein belongs to the mitochondrial carrier (TC 2.A.29) family. Homodimer (via N-terminus). As to expression, at 10.5 dpc, expressed in branchial arches, a well as in the limb and tail buds. At 13.5 dpc expression is predominant in epithelial structures and the forebrain, kidney and liver. Expression in liver is maintained into adulthood.

Its subcellular location is the mitochondrion inner membrane. The catalysed reaction is L-aspartate(in) + L-glutamate(out) + H(+)(out) = L-aspartate(out) + L-glutamate(in) + H(+)(in). It catalyses the reaction 3-sulfino-L-alanine(out) + L-glutamate(in) + H(+)(in) = 3-sulfino-L-alanine(in) + L-glutamate(out) + H(+)(out). It carries out the reaction 3-sulfino-L-alanine(out) + L-aspartate(in) = 3-sulfino-L-alanine(in) + L-aspartate(out). Mitochondrial electrogenic aspartate/glutamate antiporter that favors efflux of aspartate and entry of glutamate and proton within the mitochondria as part of the malate-aspartate shuttle. Also mediates the uptake of L-cysteinesulfinate (3-sulfino-L-alanine) by mitochondria in exchange of L-glutamate and proton. Can also exchange L-cysteinesulfinate with aspartate in their anionic form without any proton translocation. Lacks transport activity towards gamma-aminobutyric acid (GABA). This Mus musculus (Mouse) protein is Electrogenic aspartate/glutamate antiporter SLC25A13, mitochondrial.